A 218-amino-acid polypeptide reads, in one-letter code: Glutathione S-transferase U22 (218 aa).

An N-acetylalanine modification is found at Ala2. The GST N-terminal domain maps to 3 to 82 (DEVILLDFWP…YIDEVWSDKN (80 aa)). Glutathione-binding positions include 13–14 (SP), 39–40 (DK), 53–54 (KI), and 66–67 (ES). Positions 88–208 (DPYQRAQARF…LHDSEKILAF (121 aa)) constitute a GST C-terminal domain. Phosphothreonine is present on Thr149.

This sequence belongs to the GST superfamily. Tau family.

The protein resides in the cytoplasm. Its subcellular location is the cytosol. It carries out the reaction RX + glutathione = an S-substituted glutathione + a halide anion + H(+). In terms of biological role, may be involved in the conjugation of reduced glutathione to a wide number of exogenous and endogenous hydrophobic electrophiles and have a detoxification role against certain herbicides. The protein is Glutathione S-transferase U22 (GSTU22) of Arabidopsis thaliana (Mouse-ear cress).